The sequence spans 433 residues: Oxaloacetate decarboxylase beta chain 2 (433 aa).

9 helical membrane passes run 13 to 35 (LMHL…WLAI), 42 to 64 (LLLL…LALT), 125 to 147 (LFYK…VGAM), 160 to 182 (LLLG…TLNY), 214 to 236 (LAPE…VPLI), 266 to 288 (ILFP…PLLG), 308 to 327 (TVQN…SVGA), 339 to 361 (TLGI…VLMA), and 413 to 432 (VAGV…YVLA).

It belongs to the GcdB/MmdB/OadB family. As to quaternary structure, heterotrimer of an alpha, a beta and a gamma subunit. Na(+) is required as a cofactor.

The protein localises to the cell membrane. It catalyses the reaction oxaloacetate + 2 Na(+)(in) + H(+) = pyruvate + 2 Na(+)(out) + CO2. Its function is as follows. Catalyzes the decarboxylation of oxaloacetate coupled to Na(+) translocation. The sequence is that of Oxaloacetate decarboxylase beta chain 2 (oadB2) from Salmonella typhimurium (strain LT2 / SGSC1412 / ATCC 700720).